Consider the following 574-residue polypeptide: Secreted lipase 1 (574 aa).

An N-terminal signal peptide occupies residues 1 to 17 (MKLSLVPIFALLSTAFA). C95 and C132 are joined by a disulfide. S244 acts as the Acyl-ester intermediate in catalysis. Cysteines 303 and 312 form a disulfide. N323 carries an N-linked (GlcNAc...) asparagine glycan. The active-site Charge relay system is the E376. N-linked (GlcNAc...) asparagine glycosylation occurs at N386. Catalysis depends on H489, which acts as the Charge relay system. N-linked (GlcNAc...) asparagine glycosylation is present at N524.

The protein belongs to the type-B carboxylesterase/lipase family.

It localises to the secreted. It carries out the reaction a carboxylic ester + H2O = an alcohol + a carboxylate + H(+). In terms of biological role, secreted lipase that allows the use of hydrolyzed lipids as carbon sources. Has highest activity with methyl umbelliferyl oleate (C18:1), whereas much lower activities are obtained with the respective esters of palmitate (C16:0) and stearate (C18:0) (24% and 12% of the activity obtained with umbelliferyl oleate, respectively). Hydrolyzes 1- and 3-positioned ester bonds in preference to 2-positioned ester bonds. The production rate of monoglycerides is lower than that of diacylglycerides. Seems not required for the penetration of intact host tissue. This chain is Secreted lipase 1, found in Botryotinia fuckeliana (strain B05.10) (Noble rot fungus).